Here is a 174-residue protein sequence, read N- to C-terminus: Dual-action ribosomal maturation protein DarP (174 aa).

The protein belongs to the DarP family.

The protein resides in the cytoplasm. In terms of biological role, member of a network of 50S ribosomal subunit biogenesis factors which assembles along the 30S-50S interface, preventing incorrect 23S rRNA structures from forming. Promotes peptidyl transferase center (PTC) maturation. The chain is Dual-action ribosomal maturation protein DarP from Vibrio campbellii (strain ATCC BAA-1116).